Here is a 159-residue protein sequence, read N- to C-terminus: Membrane protein FAM174B (159 aa).

The first 27 residues, 1–27 (MRAALPPARLLPLLLLLALLGAPAARA), serve as a signal peptide directing secretion. Residues 28 to 73 (SRAQSAAPPQPGAERQPRPPPGPGPGNATGTGSGEAAGGGGSSNSS) form a disordered region. Topologically, residues 28 to 90 (SRAQSAAPPQ…ISSLLRDLHT (63 aa)) are extracellular. Gly residues predominate over residues 52 to 69 (PGNATGTGSGEAAGGGGS). An N-linked (GlcNAc...) asparagine glycan is attached at N54. A helical transmembrane segment spans residues 91–111 (LKAAVIVACAFTAFLIACLLL). Residues 112-159 (RVFRSGKRLKKTRKYDIITTPAERVEMAPLNEEDDEDEDSTVFDIKYR) are Cytoplasmic-facing.

This sequence belongs to the FAM174 family.

Its subcellular location is the cell membrane. It is found in the golgi apparatus. Its function is as follows. Essential for Golgi structural integrity. The protein is Membrane protein FAM174B (FAM174B) of Bos taurus (Bovine).